Reading from the N-terminus, the 467-residue chain is uncharacterized protein (467 aa).

Residues 1-60 are disordered; it reads MVRVSRGCQSCVDAKLQSTPSPSPSKSPSPTESPEQCLQKRQSGEQVVLPSRPFPRTSPR.

Functionally, involved in osmoadaptation. This is an uncharacterized protein from Emericella nidulans (strain FGSC A4 / ATCC 38163 / CBS 112.46 / NRRL 194 / M139) (Aspergillus nidulans).